The chain runs to 872 residues: Translation initiation factor IF-2 (872 aa).

Basic and acidic residues predominate over residues alanine 130–alanine 155. The disordered stretch occupies residues alanine 130–glutamine 282. Positions glutamate 156 to proline 181 are enriched in low complexity. Over residues alanine 182 to proline 194 the composition is skewed to pro residues. Residues lysine 195–arginine 211 are compositionally biased toward low complexity. Over residues arginine 271–glutamine 282 the composition is skewed to basic and acidic residues. A tr-type G domain is found at threonine 371–aspartate 539. The G1 stretch occupies residues glycine 380 to threonine 387. Glycine 380 to threonine 387 contacts GTP. A G2 region spans residues glycine 405–histidine 409. Residues aspartate 427–glycine 430 form a G3 region. GTP is bound by residues aspartate 427–histidine 431 and asparagine 481–aspartate 484. A G4 region spans residues asparagine 481 to aspartate 484. The tract at residues serine 517–lysine 519 is G5.

Belongs to the TRAFAC class translation factor GTPase superfamily. Classic translation factor GTPase family. IF-2 subfamily.

It is found in the cytoplasm. In terms of biological role, one of the essential components for the initiation of protein synthesis. Protects formylmethionyl-tRNA from spontaneous hydrolysis and promotes its binding to the 30S ribosomal subunits. Also involved in the hydrolysis of GTP during the formation of the 70S ribosomal complex. In Paramagnetospirillum magneticum (strain ATCC 700264 / AMB-1) (Magnetospirillum magneticum), this protein is Translation initiation factor IF-2.